The sequence spans 301 residues: Fluoroquinolones export ATP-binding protein Rv2688c (301 aa).

The ABC transporter domain occupies 18–246; the sequence is IRVRGLTFRY…RSRRRVRVEY (229 aa). 52–59 contacts ATP; sequence GPSGAGKS.

It belongs to the ABC transporter superfamily. As to quaternary structure, the complex is composed of 2 ATP-binding proteins (Rv2688c) and 2 transmembrane proteins (Rv2686c and Rv2687c).

It localises to the cell membrane. Inhibited by reserpine and verapamil. Functionally, part of the ABC transporter complex Rv2686c/Rv2687c/Rv2688c involved in fluoroquinolones export. Confers resistance to ciprofloxacin and, to a lesser extent, norfloxacin, moxifloxacin and sparfloxacin. Probably responsible for energy coupling to the transport system. This is Fluoroquinolones export ATP-binding protein Rv2688c from Mycobacterium tuberculosis (strain ATCC 25618 / H37Rv).